A 320-amino-acid chain; its full sequence is Ferrochelatase (320 aa).

Positions 194 and 275 each coordinate Fe cation.

This sequence belongs to the ferrochelatase family.

The protein resides in the cytoplasm. The enzyme catalyses heme b + 2 H(+) = protoporphyrin IX + Fe(2+). Its pathway is porphyrin-containing compound metabolism; protoheme biosynthesis; protoheme from protoporphyrin-IX: step 1/1. Its function is as follows. Catalyzes the ferrous insertion into protoporphyrin IX. This Enterobacter sp. (strain 638) protein is Ferrochelatase.